A 325-amino-acid chain; its full sequence is Ribosomal RNA small subunit methyltransferase H (325 aa).

Residues 38–40, Asp-55, Phe-82, Asp-103, and Gln-110 each bind S-adenosyl-L-methionine; that span reads GGY. Disordered stretches follow at residues 256–275 and 281–307; these read SGGD…AARA and PARK…RSAV.

Belongs to the methyltransferase superfamily. RsmH family.

It is found in the cytoplasm. It carries out the reaction cytidine(1402) in 16S rRNA + S-adenosyl-L-methionine = N(4)-methylcytidine(1402) in 16S rRNA + S-adenosyl-L-homocysteine + H(+). Specifically methylates the N4 position of cytidine in position 1402 (C1402) of 16S rRNA. This chain is Ribosomal RNA small subunit methyltransferase H, found in Sphingopyxis alaskensis (strain DSM 13593 / LMG 18877 / RB2256) (Sphingomonas alaskensis).